We begin with the raw amino-acid sequence, 322 residues long: Cell division control protein 10 (322 aa).

At Met1 the chain carries N-acetylmethionine. The Septin-type G domain occupies 29–302 (KGFQFNIMVV…EGFRARQLIA (274 aa)). Positions 39 to 46 (GQSGLGKS) are G1 motif. Residues 39–46 (GQSGLGKS), Thr74, Gly100, and 180–188 (KSDTLTLDE) each bind GTP. The segment at 97–100 (DTPG) is G3 motif. The tract at residues 179 to 182 (GKSD) is G4 motif. Thr216 carries the post-translational modification Phosphothreonine. The GTP site is built by Gly236 and Arg251.

The protein belongs to the TRAFAC class TrmE-Era-EngA-EngB-Septin-like GTPase superfamily. Septin GTPase family. In terms of assembly, component of the septin complex which consists of CDC3, CDC10, CDC11, CDC12 and probably SHS1 and rearranges to a cortical collar of highly ordered filaments at the mother-bud-neck. A complex formed by CDC3, CDC10, CDC11 and CDC12 is capable of forming long filaments in vitro and the components seem to be present in a 2:2:2:2 arrangement in vivo. The filaments are proposed to be formed by the end-to-end polymerization of CDC3-CDC12-CDC11 complexes with CDC10 serving as a bridge to bundle the polymers into paired filaments. Component of the GIN4 complex composed of at least BNI5, CDC3, CDC10, CDC11, CDC12, GIN4, NAP1 and SHS1. Self-associates. Interacts with SYP1.

The protein localises to the membrane. Its subcellular location is the bud neck. Septins are GTPases involved in cytokinesis that assemble early in the cell cycle as a patch at the incipient bud site and form a ring approximate 15 minutes before bud emergence, which transforms into an hour-glass shaped collar of cortical filaments that spans both sides of the mother-bud neck. This collar persists until just before cytokinesis, when it splits into two rings that occupy opposite sides of the neck. The septins at the bud neck serve as a structural scaffold that recruits different components involved in diverse processes at specific stages during the cell cycle. Many proteins bind asymmetrically to the septin collar. The septin assembly is regulated by protein kinases GIN4 and/or CLA4. May act by recruiting MYO1 and HOF1, a protein involved in septation, to the site of cleavage. Septins are also involved in cell morphogenesis, bud site selection, chitin deposition, cell cycle regulation, cell compartmentalization and spore wall formation. In Saccharomyces cerevisiae (strain ATCC 204508 / S288c) (Baker's yeast), this protein is Cell division control protein 10 (CDC10).